Here is a 360-residue protein sequence, read N- to C-terminus: Aspartate beta-hydroxylase domain-containing protein 1 (360 aa).

Residues 1–45 (MWKGGNQEAVIEGSGGELGVPGSWGLQDAACHLARASLPIMFPWP) are Cytoplasmic-facing. Residues 46–68 (LPLGSSALTMLLGALTSLFLWYC) form a helical membrane-spanning segment. At 69–360 (YRLGSQDMQA…ALDFVFAPDP (292 aa)) the chain is on the lumenal side.

The protein belongs to the aspartyl/asparaginyl beta-hydroxylase family.

Its subcellular location is the membrane. The chain is Aspartate beta-hydroxylase domain-containing protein 1 (Asphd1) from Mus musculus (Mouse).